The following is a 452-amino-acid chain: Digeranylgeranylglycerophospholipid reductase (452 aa).

FAD is bound by residues 15–16 (FA), 35–36 (DS), and 45–50 (KPCGDA). Histidine 55 is a binding site for a 2,3-bis-O-phytanyl-sn-glycerol 1-phospholipid. FAD contacts are provided by alanine 122 and aspartate 288. Residue histidine 297 coordinates a 2,3-bis-O-phytanyl-sn-glycerol 1-phospholipid. Residue 300-301 (GK) participates in FAD binding. Cysteine 310 and cysteine 335 form a disulfide bridge. Tyrosine 340 is a binding site for a 2,3-bis-O-phytanyl-sn-glycerol 1-phospholipid.

This sequence belongs to the geranylgeranyl reductase family. Monomer. FAD serves as cofactor.

The enzyme catalyses a 2,3-bis-O-phytanyl-sn-glycerol 1-phospholipid + 8 A = a 2,3-bis-O-(geranylgeranyl)-sn-glycerol 1-phospholipid + 8 AH2. It carries out the reaction 2,3-bis-O-(phytanyl)-sn-glycerol 1-phosphate + 8 A = 2,3-bis-O-(geranylgeranyl)-sn-glycerol 1-phosphate + 8 AH2. The catalysed reaction is sn-3-O-phytanylglycerol 1-phosphate + 4 A = sn-3-O-(geranylgeranyl)glycerol 1-phosphate + 4 AH2. It catalyses the reaction phytyl diphosphate + 3 A = (2E,6E,10E)-geranylgeranyl diphosphate + 3 AH2. It functions in the pathway membrane lipid metabolism; glycerophospholipid metabolism. Is involved in the reduction of 2,3-digeranylgeranylglycerophospholipids (unsaturated archaeols) into 2,3-diphytanylglycerophospholipids (saturated archaeols) in the biosynthesis of archaeal membrane lipids. Catalyzes the formation of archaetidic acid (2,3-di-O-phytanyl-sn-glyceryl phosphate) from 2,3-di-O-geranylgeranylglyceryl phosphate (DGGGP) via the hydrogenation of each double bond of the isoprenoid chains. Is not active with NADPH or NADH as an electron donor; the physiological reducing agent is unknown. Is also active on the more upstream precursors of membrane lipid biosynthesis, catalyzing the complete reduction of 3-O-geranylgeranylglyceryl phosphate (GGGP) to 3-O-phytanylglyceryl phosphate, and the partial reduction of geranylgeranyl diphosphate (GGPP) to phytyl diphosphate, thus reducing three of four GGPP double bonds and preserving the allylic double bond (at position 2). This reaction product is a reactive prenyl donor, which can be used as a substrate by archaeal prenyltransferases such as GGGP synthases. This chain is Digeranylgeranylglycerophospholipid reductase, found in Sulfolobus acidocaldarius (strain ATCC 33909 / DSM 639 / JCM 8929 / NBRC 15157 / NCIMB 11770).